A 281-amino-acid chain; its full sequence is ATP phosphoribosyltransferase (281 aa).

It belongs to the ATP phosphoribosyltransferase family. Long subfamily. The cofactor is Mg(2+).

The protein resides in the cytoplasm. It carries out the reaction 1-(5-phospho-beta-D-ribosyl)-ATP + diphosphate = 5-phospho-alpha-D-ribose 1-diphosphate + ATP. The protein operates within amino-acid biosynthesis; L-histidine biosynthesis; L-histidine from 5-phospho-alpha-D-ribose 1-diphosphate: step 1/9. Feedback inhibited by histidine. Catalyzes the condensation of ATP and 5-phosphoribose 1-diphosphate to form N'-(5'-phosphoribosyl)-ATP (PR-ATP). Has a crucial role in the pathway because the rate of histidine biosynthesis seems to be controlled primarily by regulation of HisG enzymatic activity. The chain is ATP phosphoribosyltransferase from Salinispora tropica (strain ATCC BAA-916 / DSM 44818 / JCM 13857 / NBRC 105044 / CNB-440).